A 171-amino-acid chain; its full sequence is 3-hydroxydecanoyl-[acyl-carrier-protein] dehydratase (171 aa).

H70 is a catalytic residue.

This sequence belongs to the thioester dehydratase family. FabA subfamily. Homodimer.

The protein localises to the cytoplasm. The enzyme catalyses a (3R)-hydroxyacyl-[ACP] = a (2E)-enoyl-[ACP] + H2O. It catalyses the reaction (3R)-hydroxydecanoyl-[ACP] = (2E)-decenoyl-[ACP] + H2O. The catalysed reaction is (2E)-decenoyl-[ACP] = (3Z)-decenoyl-[ACP]. Its pathway is lipid metabolism; fatty acid biosynthesis. Its function is as follows. Necessary for the introduction of cis unsaturation into fatty acids. Catalyzes the dehydration of (3R)-3-hydroxydecanoyl-ACP to E-(2)-decenoyl-ACP and then its isomerization to Z-(3)-decenoyl-ACP. Can catalyze the dehydratase reaction for beta-hydroxyacyl-ACPs with saturated chain lengths up to 16:0, being most active on intermediate chain length. This Methylobacillus flagellatus (strain ATCC 51484 / DSM 6875 / VKM B-1610 / KT) protein is 3-hydroxydecanoyl-[acyl-carrier-protein] dehydratase.